Reading from the N-terminus, the 1070-residue chain is DNA double-strand break repair Rad50 ATPase (1070 aa).

ATP contacts are provided by residues Arg12, 32-38 (NGSGKSS), and Gln142. Coiled coils occupy residues 227–257 (LEEL…RLQE), 369–403 (ECRT…EKAG), and 449–478 (LREL…KEIR). Positions 508 to 607 (LENLEDFNEL…KLNRLKEAKK (100 aa)) constitute a Zinc-hook domain. Zn(2+)-binding residues include Cys555 and Cys558. Coiled-coil stretches lie at residues 570 to 614 (TAEE…QAYD) and 878 to 908 (LKRL…ADEL). 969–974 (LLSGGE) lines the ATP pocket.

The protein belongs to the SMC family. RAD50 subfamily. Homodimer. Forms a heterotetramer composed of two Mre11 subunits and two Rad50 subunits. Zn(2+) is required as a cofactor.

Part of the Rad50/Mre11 complex, which is involved in the early steps of DNA double-strand break (DSB) repair. The complex may facilitate opening of the processed DNA ends to aid in the recruitment of HerA and NurA. Rad50 controls the balance between DNA end bridging and DNA resection via ATP-dependent structural rearrangements of the Rad50/Mre11 complex. This Methanosarcina mazei (strain ATCC BAA-159 / DSM 3647 / Goe1 / Go1 / JCM 11833 / OCM 88) (Methanosarcina frisia) protein is DNA double-strand break repair Rad50 ATPase.